Reading from the N-terminus, the 99-residue chain is Aspartyl/glutamyl-tRNA(Asn/Gln) amidotransferase subunit C (99 aa).

Belongs to the GatC family. In terms of assembly, heterotrimer of A, B and C subunits.

The catalysed reaction is L-glutamyl-tRNA(Gln) + L-glutamine + ATP + H2O = L-glutaminyl-tRNA(Gln) + L-glutamate + ADP + phosphate + H(+). It carries out the reaction L-aspartyl-tRNA(Asn) + L-glutamine + ATP + H2O = L-asparaginyl-tRNA(Asn) + L-glutamate + ADP + phosphate + 2 H(+). Functionally, allows the formation of correctly charged Asn-tRNA(Asn) or Gln-tRNA(Gln) through the transamidation of misacylated Asp-tRNA(Asn) or Glu-tRNA(Gln) in organisms which lack either or both of asparaginyl-tRNA or glutaminyl-tRNA synthetases. The reaction takes place in the presence of glutamine and ATP through an activated phospho-Asp-tRNA(Asn) or phospho-Glu-tRNA(Gln). This Corynebacterium glutamicum (strain R) protein is Aspartyl/glutamyl-tRNA(Asn/Gln) amidotransferase subunit C.